We begin with the raw amino-acid sequence, 226 residues long: Matrix protein (226 aa).

Residues 2–4 carry the dynamin binding motif; it reads KSL. The PPXY motif signature appears at 28–31; it reads PPSY. The short motif at 40-43 is the PTAP/PSAP motif element; sequence PSAP.

It belongs to the vesiculoviruses matrix protein family. In terms of assembly, homomultimer. Interacts with viral nucleocapsid; this interaction contributes to the virion assembly. Interacts with the viral envelope glycoprotein; this interaction contributes to the virion assembly. Interacts with host RAE1-NUP98 complex. Interacts with host NEDD4 and TSG101. Interacts with host dynamin. Interacts with host NDUFAF4; the interaction inhibits viral propagation and is independent of interferon activation. Interacts with host GTF2H5; the interaction may inhibit host transcription. Phosphorylated by host.

The protein resides in the virion. Its subcellular location is the host endomembrane system. The protein localises to the host nucleus membrane. It is found in the host nucleus. It localises to the host cytoplasm. Functionally, forms a double layer around the helical nucleocapsid, the inner matrix layer binding to the N helix and the outer matrix layer binding to the envelope glycoprotein. Plays a major role in assembly and budding of virion, by recruiting cellular partners of the ESCRT complexes that play a key role in releasing the budding particle from the host membrane. Condensates the ribonucleocapsid core during virus assembly. Inhibits the host mRNA nuclear export thereby inducing the shut off of cellular transcription and preventing the interferon signaling and the establishment of antiviral state in infected cells. This shutoff presumably inhibits interferon signaling and thus establishment of antiviral state in virus infected cells. Induces cell-rounding, cytoskeleton disorganization and apoptosis in infected cell. Inhibits host transcription, possibly through interaction with host DNA repair factor IIH/TFIIH GTF2H5 subunit. The protein is Matrix protein (M) of Isfahan virus (ISFV).